An 87-amino-acid polypeptide reads, in one-letter code: Protein OPG096 (87 aa).

A run of 2 helical transmembrane segments spans residues 39-59 (PLIRLFIDILLFVIVIYIFTV) and 67-87 (QMLLALLALVISLTIFYYFIL).

The protein belongs to the orthopoxvirus OPG096 family. Interacts with OPG158.

It localises to the virion membrane. It is found in the host cytoplasm. The protein resides in the host endoplasmic reticulum membrane. Early protein involved in virion morphogenesis. Participates in the formation and elongation of crescent-shaped membrane precursors of immature virions in cytoplasmic factories. The protein is Protein OPG096 (OPG096) of Homo sapiens (Human).